Here is a 303-residue protein sequence, read N- to C-terminus: Acetylglutamate kinase (303 aa).

Substrate is bound by residues 76 to 77 (GG), R98, and N199.

The protein belongs to the acetylglutamate kinase family. ArgB subfamily.

The protein localises to the cytoplasm. It catalyses the reaction N-acetyl-L-glutamate + ATP = N-acetyl-L-glutamyl 5-phosphate + ADP. It participates in amino-acid biosynthesis; L-arginine biosynthesis; N(2)-acetyl-L-ornithine from L-glutamate: step 2/4. Functionally, catalyzes the ATP-dependent phosphorylation of N-acetyl-L-glutamate. The protein is Acetylglutamate kinase of Clavibacter michiganensis subsp. michiganensis (strain NCPPB 382).